The primary structure comprises 200 residues: Large ribosomal subunit protein uL4 (200 aa).

Residues 43 to 71 (RAQKTRAEVSGSGKKPWRQKGTGRARSGD) form a disordered region.

It belongs to the universal ribosomal protein uL4 family. As to quaternary structure, part of the 50S ribosomal subunit.

One of the primary rRNA binding proteins, this protein initially binds near the 5'-end of the 23S rRNA. It is important during the early stages of 50S assembly. It makes multiple contacts with different domains of the 23S rRNA in the assembled 50S subunit and ribosome. Its function is as follows. Forms part of the polypeptide exit tunnel. This Pasteurella multocida (strain Pm70) protein is Large ribosomal subunit protein uL4.